We begin with the raw amino-acid sequence, 239 residues long: Type II restriction enzyme Eco47II (239 aa).

The catalysed reaction is Endonucleolytic cleavage of DNA to give specific double-stranded fragments with terminal 5'-phosphates.. A P subtype restriction enzyme that recognizes the double-stranded sequence 5'-GGNCC-3'; the cleavage site is unknown. The chain is Type II restriction enzyme Eco47II from Escherichia coli.